The primary structure comprises 103 residues: Large ribosomal subunit protein uL24 (103 aa).

Belongs to the universal ribosomal protein uL24 family. In terms of assembly, part of the 50S ribosomal subunit.

In terms of biological role, one of two assembly initiator proteins, it binds directly to the 5'-end of the 23S rRNA, where it nucleates assembly of the 50S subunit. Functionally, one of the proteins that surrounds the polypeptide exit tunnel on the outside of the subunit. This Haemophilus influenzae (strain ATCC 51907 / DSM 11121 / KW20 / Rd) protein is Large ribosomal subunit protein uL24.